A 77-amino-acid chain; its full sequence is Envelope protein US9 homolog (77 aa).

The Di-leucine internalization motif signature appears at 12-13; it reads LL.

The protein belongs to the alphaherpesvirinae envelope protein US9 family.

The chain is Envelope protein US9 homolog from Chlorocebus aethiops (Green monkey).